The sequence spans 89 residues: UPF0147 protein TV0625 (89 aa).

It belongs to the UPF0147 family.

The polypeptide is UPF0147 protein TV0625 (Thermoplasma volcanium (strain ATCC 51530 / DSM 4299 / JCM 9571 / NBRC 15438 / GSS1)).